The following is a 499-amino-acid chain: Cobyric acid synthase (499 aa).

Residues R266–W449 form the GATase cobBQ-type domain. The Nucleophile role is filled by C344. H441 is a catalytic residue.

Belongs to the CobB/CobQ family. CobQ subfamily.

The protein operates within cofactor biosynthesis; adenosylcobalamin biosynthesis. Catalyzes amidations at positions B, D, E, and G on adenosylcobyrinic A,C-diamide. NH(2) groups are provided by glutamine, and one molecule of ATP is hydrogenolyzed for each amidation. The protein is Cobyric acid synthase of Synechococcus sp. (strain JA-2-3B'a(2-13)) (Cyanobacteria bacterium Yellowstone B-Prime).